The chain runs to 510 residues: Cytochrome P450 monooxygenase btcC (510 aa).

A helical membrane pass occupies residues 1 to 21 (MSFPGVIFVVSFFPLLMGIAV). Cys446 lines the heme pocket.

Belongs to the cytochrome P450 family. Requires heme as cofactor.

The protein localises to the membrane. Its pathway is secondary metabolite biosynthesis; terpenoid biosynthesis. Functionally, cytochrome P450 monooxygenase; part of the gene cluster that mediates the biosynthesis of betaestacins. The bifunctional terpene synthase btcA converts isopentenyl diphosphate (IPP) and dimethylallyl diphosphate (DMAPP) into the sesterterpene betaestacin I. The C-terminal prenyltransferase (PT) domain of btcA catalyzes formation of GFPP, whereas the N-terminal terpene cyclase (TC) domain catalyzes the cyclization of GFPP into betaestacin I. The cytochrome P450 monooxygenase btcB is then responsible for the six-step oxidation of betaestacin I to yield betaestacin II. The roles of the cytochrome P450 monooxygenase btcC and the alpha-ketoglutarate-dependent dioxygenase btcD have not been identified yet. The polypeptide is Cytochrome P450 monooxygenase btcC (Neocamarosporium betae (Beet black rot fungus)).